The following is a 69-amino-acid chain: ATP synthase F(0) complex subunit 8 (69 aa).

The chain crosses the membrane as a helical span at residues 8–24 (TWLLTITLMILALFCIY). At Lys-55 the chain carries N6-acetyllysine; alternate. Residue Lys-55 is modified to N6-succinyllysine; alternate. Position 58 is an N6-acetyllysine (Lys-58).

It belongs to the ATPase protein 8 family. As to quaternary structure, component of the ATP synthase complex composed at least of ATP5F1A/subunit alpha, ATP5F1B/subunit beta, ATP5MC1/subunit c (homooctomer), MT-ATP6/subunit a, MT-ATP8/subunit 8, ATP5ME/subunit e, ATP5MF/subunit f, ATP5MG/subunit g, ATP5MK/subunit k, ATP5MJ/subunit j, ATP5F1C/subunit gamma, ATP5F1D/subunit delta, ATP5F1E/subunit epsilon, ATP5PF/subunit F6, ATP5PB/subunit b, ATP5PD/subunit d, ATP5PO/subunit OSCP. ATP synthase complex consists of a soluble F(1) head domain (subunits alpha(3) and beta(3)) - the catalytic core - and a membrane F(0) domain - the membrane proton channel (subunits c, a, 8, e, f, g, k and j). These two domains are linked by a central stalk (subunits gamma, delta, and epsilon) rotating inside the F1 region and a stationary peripheral stalk (subunits F6, b, d, and OSCP). Interacts with PRICKLE3.

It is found in the mitochondrion membrane. Subunit 8, of the mitochondrial membrane ATP synthase complex (F(1)F(0) ATP synthase or Complex V) that produces ATP from ADP in the presence of a proton gradient across the membrane which is generated by electron transport complexes of the respiratory chain. ATP synthase complex consist of a soluble F(1) head domain - the catalytic core - and a membrane F(1) domain - the membrane proton channel. These two domains are linked by a central stalk rotating inside the F(1) region and a stationary peripheral stalk. During catalysis, ATP synthesis in the catalytic domain of F(1) is coupled via a rotary mechanism of the central stalk subunits to proton translocation. In vivo, can only synthesize ATP although its ATP hydrolase activity can be activated artificially in vitro. Part of the complex F(0) domain. The chain is ATP synthase F(0) complex subunit 8 from Osphranter robustus (Wallaroo).